A 78-amino-acid chain; its full sequence is Acyl carrier protein (78 aa).

The Carrier domain occupies 2 to 77; the sequence is SDIADRVKKI…DAIKFLEKNS (76 aa). S37 bears the O-(pantetheine 4'-phosphoryl)serine mark.

The protein belongs to the acyl carrier protein (ACP) family. In terms of processing, 4'-phosphopantetheine is transferred from CoA to a specific serine of apo-ACP by AcpS. This modification is essential for activity because fatty acids are bound in thioester linkage to the sulfhydryl of the prosthetic group.

The protein resides in the cytoplasm. The protein operates within lipid metabolism; fatty acid biosynthesis. In terms of biological role, carrier of the growing fatty acid chain in fatty acid biosynthesis. In Methylobacterium sp. (strain 4-46), this protein is Acyl carrier protein.